A 476-amino-acid polypeptide reads, in one-letter code: Inactive glucose-1-phosphate adenylyltransferase small subunit 2, chloroplastic (476 aa).

A chloroplast-targeting transit peptide spans 1–55; sequence MQISSSSFITKFTNLHMVRSTSDHHQWRHNYNLKQLFIPNLSVSNSQHLPLNQSV.

Belongs to the bacterial/plant glucose-1-phosphate adenylyltransferase family. As to quaternary structure, heterotetramer. As to expression, expressed at very low levels in leaves, inflorescences, fruits, and roots.

It is found in the plastid. The protein resides in the chloroplast. In Arabidopsis thaliana (Mouse-ear cress), this protein is Inactive glucose-1-phosphate adenylyltransferase small subunit 2, chloroplastic.